Here is a 408-residue protein sequence, read N- to C-terminus: Peptidase T (408 aa).

Position 78 (histidine 78) interacts with Zn(2+). Residue aspartate 80 is part of the active site. Residue aspartate 140 coordinates Zn(2+). The Proton acceptor role is filled by glutamate 173. Residues glutamate 174, aspartate 196, and histidine 379 each coordinate Zn(2+).

This sequence belongs to the peptidase M20B family. Zn(2+) serves as cofactor.

Its subcellular location is the cytoplasm. It carries out the reaction Release of the N-terminal residue from a tripeptide.. Cleaves the N-terminal amino acid of tripeptides. This Shigella flexneri serotype 5b (strain 8401) protein is Peptidase T.